Reading from the N-terminus, the 250-residue chain is Small ribosomal subunit protein uS3 (250 aa).

Positions Val-39–Asp-107 constitute a KH type-2 domain. The disordered stretch occupies residues Met-215 to Glu-250. Residues Ala-220–Glu-250 show a composition bias toward basic and acidic residues.

Belongs to the universal ribosomal protein uS3 family. In terms of assembly, part of the 30S ribosomal subunit. Forms a tight complex with proteins S10 and S14.

Functionally, binds the lower part of the 30S subunit head. Binds mRNA in the 70S ribosome, positioning it for translation. The polypeptide is Small ribosomal subunit protein uS3 (Acinetobacter baumannii (strain AB307-0294)).